The chain runs to 298 residues: Apolipoprotein E (298 aa).

The N-terminal stretch at 1–18 (MKVLWAALVVTLLAGCQA) is a signal peptide. 6 consecutive repeat copies span residues 74–95 (LLMEDTMKEVKAYKSELEQELA), 96–117 (PMAEDTKARLSKELQAAQSRLR), 118–139 (ADMEEVLNRLSQYRGEVQTMMG), 140–161 (QSGEELRARLAAHLRKLRKRLL), 162–183 (RDVEEVQKRMDVYRAGAQEGAE), and 223–244 (GRLEKVGSQARDRLEEVREQME). An 8 X 22 AA approximate tandem repeats region spans residues 74–244 (LLMEDTMKEV…RLEEVREQME (171 aa)). The residue at position 137 (Met-137) is a Methionine sulfoxide. Ser-141 carries the post-translational modification Phosphoserine. The interval 152 to 162 (HLRKLRKRLLR) is LDL and other lipoprotein receptors binding. Residue 156 to 159 (LRKR) coordinates heparin. Residues 204–272 (SLPSQPLRER…SWFEPMMEDM (69 aa)) form a lipid-binding and lipoprotein association region. A heparin-binding site is contributed by 218–225 (GEQMRGRL). A specificity for association with VLDL region spans residues 260–272 (RFKSWFEPMMEDM).

Belongs to the apolipoprotein A1/A4/E family. In terms of assembly, homotetramer. May interact with ABCA1; functionally associated with ABCA1 in the biogenesis of HDLs. May interact with APP/A4 amyloid-beta peptide; the interaction is extremely stable in vitro but its physiological significance is unclear. May interact with MAPT. May interact with MAP2. In the cerebrospinal fluid, interacts with secreted SORL1. Interacts with PMEL; this allows the loading of PMEL luminal fragment on ILVs to induce fibril nucleation. Post-translationally, APOE exists as multiple glycosylated and sialylated glycoforms within cells and in plasma. The extent of glycosylation and sialylation are tissue and context specific. Glycated in plasma VLDL. In terms of processing, phosphorylated by FAM20C in the extracellular medium.

It localises to the secreted. The protein localises to the extracellular space. The protein resides in the extracellular matrix. It is found in the extracellular vesicle. Its subcellular location is the endosome. It localises to the multivesicular body. Its function is as follows. APOE is an apolipoprotein, a protein associating with lipid particles, that mainly functions in lipoprotein-mediated lipid transport between organs via the plasma and interstitial fluids. APOE is a core component of plasma lipoproteins and is involved in their production, conversion and clearance. Apolipoproteins are amphipathic molecules that interact both with lipids of the lipoprotein particle core and the aqueous environment of the plasma. As such, APOE associates with chylomicrons, chylomicron remnants, very low density lipoproteins (VLDL) and intermediate density lipoproteins (IDL) but shows a preferential binding to high-density lipoproteins (HDL). It also binds a wide range of cellular receptors including the LDL receptor/LDLR, the LDL receptor-related proteins LRP1, LRP2 and LRP8 and the very low-density lipoprotein receptor/VLDLR that mediate the cellular uptake of the APOE-containing lipoprotein particles. Finally, APOE also has a heparin-binding activity and binds heparan-sulfate proteoglycans on the surface of cells, a property that supports the capture and the receptor-mediated uptake of APOE-containing lipoproteins by cells. A main function of APOE is to mediate lipoprotein clearance through the uptake of chylomicrons, VLDLs, and HDLs by hepatocytes. APOE is also involved in the biosynthesis by the liver of VLDLs as well as their uptake by peripheral tissues ensuring the delivery of triglycerides and energy storage in muscle, heart and adipose tissues. By participating in the lipoprotein-mediated distribution of lipids among tissues, APOE plays a critical role in plasma and tissues lipid homeostasis. APOE is also involved in two steps of reverse cholesterol transport, the HDLs-mediated transport of cholesterol from peripheral tissues to the liver, and thereby plays an important role in cholesterol homeostasis. First, it is functionally associated with ABCA1 in the biogenesis of HDLs in tissues. Second, it is enriched in circulating HDLs and mediates their uptake by hepatocytes. APOE also plays an important role in lipid transport in the central nervous system, regulating neuron survival and sprouting. This Dasyprocta punctata (Central American agouti) protein is Apolipoprotein E (APOE).